Reading from the N-terminus, the 318-residue chain is NADH-ubiquinone oxidoreductase chain 1 (318 aa).

8 helical membrane-spanning segments follow: residues Phe2 to Leu22, Ile68 to Pro88, Leu100 to Gly120, Ala147 to Ile167, Val172 to Glu192, Ala217 to Phe237, Glu253 to Ile273, and Leu294 to Ile314.

Belongs to the complex I subunit 1 family.

The protein resides in the mitochondrion inner membrane. It catalyses the reaction a ubiquinone + NADH + 5 H(+)(in) = a ubiquinol + NAD(+) + 4 H(+)(out). Its function is as follows. Core subunit of the mitochondrial membrane respiratory chain NADH dehydrogenase (Complex I) that is believed to belong to the minimal assembly required for catalysis. Complex I functions in the transfer of electrons from NADH to the respiratory chain. The immediate electron acceptor for the enzyme is believed to be ubiquinone. This Ovis aries (Sheep) protein is NADH-ubiquinone oxidoreductase chain 1 (MT-ND1).